Reading from the N-terminus, the 679-residue chain is Methionine--tRNA ligase (679 aa).

The short motif at 14–24 (PYANGSIHLGH) is the 'HIGH' region element. The Zn(2+) site is built by cysteine 145, cysteine 148, cysteine 158, and cysteine 161. The 'KMSKS' region signature appears at 331-335 (KMSKS). Lysine 334 contributes to the ATP binding site. The tRNA-binding domain occupies 577–679 (TFAAVDLRVA…SGAKPGQRIK (103 aa)).

The protein belongs to the class-I aminoacyl-tRNA synthetase family. MetG type 1 subfamily. In terms of assembly, homodimer. The cofactor is Zn(2+).

Its subcellular location is the cytoplasm. The enzyme catalyses tRNA(Met) + L-methionine + ATP = L-methionyl-tRNA(Met) + AMP + diphosphate. Functionally, is required not only for elongation of protein synthesis but also for the initiation of all mRNA translation through initiator tRNA(fMet) aminoacylation. This chain is Methionine--tRNA ligase, found in Pseudomonas putida (strain ATCC 47054 / DSM 6125 / CFBP 8728 / NCIMB 11950 / KT2440).